A 509-amino-acid polypeptide reads, in one-letter code: Methionine--tRNA ligase (509 aa).

Residues 12 to 22 carry the 'HIGH' region motif; that stretch reads YYVNDVPHIGH. The short motif at 295–299 is the 'KMSKS' region element; that stretch reads KISKS. An ATP-binding site is contributed by Lys298.

It belongs to the class-I aminoacyl-tRNA synthetase family. MetG type 2B subfamily. In terms of assembly, monomer.

The protein localises to the cytoplasm. The catalysed reaction is tRNA(Met) + L-methionine + ATP = L-methionyl-tRNA(Met) + AMP + diphosphate. In terms of biological role, is required not only for elongation of protein synthesis but also for the initiation of all mRNA translation through initiator tRNA(fMet) aminoacylation. This Rickettsia bellii (strain RML369-C) protein is Methionine--tRNA ligase.